We begin with the raw amino-acid sequence, 334 residues long: Retinol dehydrogenase 14 (334 aa).

Residue 51-57 participates in NADP(+) binding; sequence GANSGLG. Position 190 (Ser-190) interacts with substrate. Tyr-215 functions as the Proton acceptor in the catalytic mechanism.

It belongs to the short-chain dehydrogenases/reductases (SDR) family.

It carries out the reaction all-trans-retinol + NADP(+) = all-trans-retinal + NADPH + H(+). The enzyme catalyses 11-cis-retinol + NADP(+) = 11-cis-retinal + NADPH + H(+). It catalyses the reaction 9-cis-retinol + NADP(+) = 9-cis-retinal + NADPH + H(+). Retinol dehydrogenase with a clear preference for NADP. Displays high activity towards 9-cis, 11-cis and all-trans-retinol. Shows a very weak activity towards 13-cis-retinol. Has no activity towards steroids. The chain is Retinol dehydrogenase 14 (Rdh14) from Mus musculus (Mouse).